The chain runs to 240 residues: Small ribosomal subunit protein uS2 (240 aa).

This sequence belongs to the universal ribosomal protein uS2 family.

The protein is Small ribosomal subunit protein uS2 of Haemophilus influenzae (strain 86-028NP).